Here is a 491-residue protein sequence, read N- to C-terminus: MSLLMISENVKLAREYALLGNYDSAMVYYQGVLDQMNKYLYSVKDTYLQQKWQQVWQEINVEAKHVKDIMKTLESFKLDSTPLKAAQHDLPASEGEVWSMPVPVERRPSPGPRKRQSSQYSDPKSHGNRPSTTVRVHRSSAQNVHNDRGKAVRCREKKEQNKGREEKNKSPAAVTEPETNKFDSTGYDKDLVEALERDIISQNPNVRWDDIADLVEAKKLLKEAVVLPMWMPEFFKGIRRPWKGVLMVGPPGTGKTLLAKAVATECKTTFFNVSSSTLTSKYRGESEKLVRLLFEMARFYSPATIFIDEIDSICSRRGTSEEHEASRRVKAELLVQMDGVGGTSENDDPSKMVMVLAATNFPWDIDEALRRRLEKRIYIPLPSAKGREELLRISLRELELADDVDLASIAENMEGYSGADITNVCRDASLMAMRRRIEGLTPEEIRNLSKEEMHMPTTMEDFEMALKKVSKSVSAADIERYEKWIFEFGSC.

Positions 1–29 are interaction with KATNB1; the sequence is MSLLMISENVKLAREYALLGNYDSAMVYY. The tract at residues 1–75 is interaction with dynein and NDEL1; it reads MSLLMISENV…VKDIMKTLES (75 aa). The interaction with microtubules stretch occupies residues 1 to 185; sequence MSLLMISENV…EPETNKFDST (185 aa). 2 positions are modified to phosphoserine; by DYRK2: serine 42 and serine 109. Residues 87–185 are disordered; that stretch reads QHDLPASEGE…EPETNKFDST (99 aa). Positions 117–144 are enriched in polar residues; it reads SSQYSDPKSHGNRPSTTVRVHRSSAQNV. Threonine 133 carries the post-translational modification Phosphothreonine; by DYRK2. The segment covering 145 to 169 has biased composition (basic and acidic residues); the sequence is HNDRGKAVRCREKKEQNKGREEKNK. Serine 170 bears the Phosphoserine mark. Position 249–256 (249–256) interacts with ATP; sequence GPPGTGKT.

This sequence belongs to the AAA ATPase family. Katanin p60 subunit A1 subfamily. In terms of assembly, can homooligomerize into hexameric rings, which may be promoted by interaction with microtubules. Interacts with KATNB1, which may serve as a targeting subunit. Interacts with ASPM; the katanin complex formation KATNA1:KATNB1 is required for the association of ASPM. Interacts with dynein and NDEL1. Associates with the E3 ligase complex containing DYRK2, EDD/UBR5, DDB1 and DCAF1 proteins (EDVP complex). Interacts with KLHL42 (via the kelch domains). Interacts with CUL3; the interaction is enhanced by KLHL42. Interacts with KATNB1 and KATNBL1. Interacts with CAMSAP2 and CAMSAP3; leading to regulate the length of CAMSAP-decorated microtubule stretches. In terms of processing, phosphorylation by DYRK2 triggers ubiquitination and subsequent degradation. Post-translationally, ubiquitinated by the BCR(KLHL42) E3 ubiquitin ligase complex, leading to its proteasomal degradation. Ubiquitinated by the EDVP E3 ligase complex and subsequently targeted for proteasomal degradation.

The protein resides in the cytoplasm. The protein localises to the midbody. It localises to the cytoskeleton. Its subcellular location is the microtubule organizing center. It is found in the centrosome. The protein resides in the spindle pole. The protein localises to the spindle. It carries out the reaction n ATP + n H2O + a microtubule = n ADP + n phosphate + (n+1) alpha/beta tubulin heterodimers.. With respect to regulation, ATPase activity is stimulated by microtubules, which promote homooligomerization. ATP-dependent microtubule severing is stimulated by interaction with KATNB1. In terms of biological role, catalytic subunit of a complex which severs microtubules in an ATP-dependent manner. Microtubule severing may promote rapid reorganization of cellular microtubule arrays and the release of microtubules from the centrosome following nucleation. Microtubule release from the mitotic spindle poles may allow depolymerization of the microtubule end proximal to the spindle pole, leading to poleward microtubule flux and poleward motion of chromosome. Microtubule release within the cell body of neurons may be required for their transport into neuronal processes by microtubule-dependent motor proteins. This transport is required for axonal growth. The chain is Katanin p60 ATPase-containing subunit A1 from Homo sapiens (Human).